A 227-amino-acid polypeptide reads, in one-letter code: Cytochrome c oxidase subunit 2 (227 aa).

At 1 to 14 (MPYPMQLGFQDATS) the chain is on the mitochondrial intermembrane side. Residues 15 to 45 (PIMEELTYFHDHTLMIVFLISSLVLYIIILM) form a helical membrane-spanning segment. The Mitochondrial matrix segment spans residues 46–59 (LTTKLTHTSTMDAQ). Residues 60 to 87 (EVETIWTILPAVILVLIALPSLRILYMM) traverse the membrane as a helical segment. At 88–227 (DEIYNPYLTI…YFEKWSSMMQ (140 aa)) the chain is on the mitochondrial intermembrane side. Histidine 161, cysteine 196, glutamate 198, cysteine 200, histidine 204, and methionine 207 together coordinate Cu cation. Residue glutamate 198 coordinates Mg(2+). Position 218 is a phosphotyrosine (tyrosine 218).

It belongs to the cytochrome c oxidase subunit 2 family. Component of the cytochrome c oxidase (complex IV, CIV), a multisubunit enzyme composed of 14 subunits. The complex is composed of a catalytic core of 3 subunits MT-CO1, MT-CO2 and MT-CO3, encoded in the mitochondrial DNA, and 11 supernumerary subunits COX4I, COX5A, COX5B, COX6A, COX6B, COX6C, COX7A, COX7B, COX7C, COX8 and NDUFA4, which are encoded in the nuclear genome. The complex exists as a monomer or a dimer and forms supercomplexes (SCs) in the inner mitochondrial membrane with NADH-ubiquinone oxidoreductase (complex I, CI) and ubiquinol-cytochrome c oxidoreductase (cytochrome b-c1 complex, complex III, CIII), resulting in different assemblies (supercomplex SCI(1)III(2)IV(1) and megacomplex MCI(2)III(2)IV(2)). Found in a complex with TMEM177, COA6, COX18, COX20, SCO1 and SCO2. Interacts with TMEM177 in a COX20-dependent manner. Interacts with COX20. Interacts with COX16. It depends on Cu cation as a cofactor.

It localises to the mitochondrion inner membrane. It carries out the reaction 4 Fe(II)-[cytochrome c] + O2 + 8 H(+)(in) = 4 Fe(III)-[cytochrome c] + 2 H2O + 4 H(+)(out). Its function is as follows. Component of the cytochrome c oxidase, the last enzyme in the mitochondrial electron transport chain which drives oxidative phosphorylation. The respiratory chain contains 3 multisubunit complexes succinate dehydrogenase (complex II, CII), ubiquinol-cytochrome c oxidoreductase (cytochrome b-c1 complex, complex III, CIII) and cytochrome c oxidase (complex IV, CIV), that cooperate to transfer electrons derived from NADH and succinate to molecular oxygen, creating an electrochemical gradient over the inner membrane that drives transmembrane transport and the ATP synthase. Cytochrome c oxidase is the component of the respiratory chain that catalyzes the reduction of oxygen to water. Electrons originating from reduced cytochrome c in the intermembrane space (IMS) are transferred via the dinuclear copper A center (CU(A)) of subunit 2 and heme A of subunit 1 to the active site in subunit 1, a binuclear center (BNC) formed by heme A3 and copper B (CU(B)). The BNC reduces molecular oxygen to 2 water molecules using 4 electrons from cytochrome c in the IMS and 4 protons from the mitochondrial matrix. The chain is Cytochrome c oxidase subunit 2 (MT-CO2) from Osphranter robustus (Wallaroo).